The sequence spans 302 residues: Putative gluconeogenesis factor (302 aa).

This sequence belongs to the gluconeogenesis factor family.

It localises to the cytoplasm. Required for morphogenesis under gluconeogenic growth conditions. The chain is Putative gluconeogenesis factor (ybhK) from Salmonella typhimurium (strain LT2 / SGSC1412 / ATCC 700720).